Here is a 515-residue protein sequence, read N- to C-terminus: MDLVTLAGQLNAGTILPETILIVTLLVVLLADLIQGRQADRWTPYFAIVGLGGAIATMIPLWTQPATISFFGSFISDHLSLFFRGLIALSALGTILMSIRYVEQTGSSLGEFMTILLTATVGGMFIAGAQELVFIFVALETLSIASYLLTGYTKRDSRSNEAALKYLLIGAASSAIFLYGSSLLYGLSGGHTQLPAIAQALSSESLGLVVALVFVIAGISFKISAVPFHQWTPDVYEGAPTPVVAFLSVGSKAAGFALAIRFLTLAFPSVTDQWQLIFTVLAILSMILGNVVALAQTSMKRMLAYSSIGQAGFVMIGFVVGTEAGYASMLFYLLVYLFMNLGAFTCVILFSLRTGTDQISEYAGLYQKDPLLTLGLSLCLLSLGGIPPLAGFFGKIYLFWAGWQAGAYGLVLLGLLTSVISIYYYIRVVKMMVVKEPQEMSEAVRNYPEVSWSSFGLRPLQVGLVMTVIATSLAGILANPLFNLVNTAVWDVPQLANQPTVMEVAYQALSPAGKS.

The next 14 membrane-spanning stretches (helical) occupy residues 14–34, 42–62, 79–99, 109–128, 132–151, 167–187, 206–226, 240–260, 274–294, 302–322, 330–350, 374–394, 396–416, and 462–482; these read TILPETILIVTLLVVLLADLI, WTPYFAIVGLGGAIATMIPLW, LSLFFRGLIALSALGTILMSI, LGEFMTILLTATVGGMFIAG, LVFIFVALETLSIASYLLTG, LLIGAASSAIFLYGSSLLYGL, LGLVVALVFVIAGISFKISAV, PTPVVAFLSVGSKAAGFALAI, WQLIFTVLAILSMILGNVVAL, MLAYSSIGQAGFVMIGFVVGT, LFYLLVYLFMNLGAFTCVILF, LGLSLCLLSLGGIPPLAGFFG, IYLFWAGWQAGAYGLVLLGLL, and VGLVMTVIATSLAGILANPLF.

Belongs to the complex I subunit 2 family. As to quaternary structure, NDH-1 can be composed of about 15 different subunits; different subcomplexes with different compositions have been identified which probably have different functions.

It is found in the cellular thylakoid membrane. The enzyme catalyses a plastoquinone + NADH + (n+1) H(+)(in) = a plastoquinol + NAD(+) + n H(+)(out). It carries out the reaction a plastoquinone + NADPH + (n+1) H(+)(in) = a plastoquinol + NADP(+) + n H(+)(out). NDH-1 shuttles electrons from an unknown electron donor, via FMN and iron-sulfur (Fe-S) centers, to quinones in the respiratory and/or the photosynthetic chain. The immediate electron acceptor for the enzyme in this species is believed to be plastoquinone. Couples the redox reaction to proton translocation, and thus conserves the redox energy in a proton gradient. Cyanobacterial NDH-1 also plays a role in inorganic carbon-concentration. This chain is NAD(P)H-quinone oxidoreductase subunit 2, found in Thermosynechococcus vestitus (strain NIES-2133 / IAM M-273 / BP-1).